The chain runs to 636 residues: Transcriptional repressor CTCFL (636 aa).

Disordered stretches follow at residues 17–38, 160–195, and 222–257; these read KEQKLKPGDLEEEKEEDGVQRV, ENPELTPDLDESTALKKPEEDEKDQLPPQGETDKRE, and LEEQQDPPAANQTSVPGAKAAKPKRRRQTKGKPQSF. A compositionally biased stretch (acidic residues) spans 160 to 170; that stretch reads ENPELTPDLDE. A compositionally biased stretch (basic residues) spans 242 to 251; it reads AKPKRRRQTK. 11 C2H2-type zinc fingers span residues 257-279, 285-307, 313-336, 342-364, 370-392, 398-421, 428-451, 458-480, 486-508, 514-537, and 546-572; these read FQCDTCPFTSSKLSTFNRHIKIH, HLCHLCLKAFRTVTLLRNHVNTH, HKCRDCDMAFVTSGELVRHRRYKH, FKCSLCKYASVEASKMKRHIRSH, FQCCQCAYASRDSYKLKRHMRTH, YECPTCHVRFTQSGTMKIHIAQKH, YECPHCATIIARKSDLRVHLRNLH, MKCRYCPAGFHERYALIQHQRTH, FKCKQCDYACKQERCLKAHMRMH, FSCLACNKHFRQKQLLTVHLRKYH, and HLCLKCDKRFSRWSNLQRHRKKCDPEH. Residues 562–624 form a disordered region; sequence QRHRKKCDPE…AAGSQSPDHG (63 aa). Over residues 568-583 the composition is skewed to basic and acidic residues; it reads CDPEHETLAPNKDRRP.

Belongs to the CTCF zinc-finger protein family. Interacts with histones, PRMT7 and SETD1A. Interacts (via N-terminus) with BAG6/BAT3. Testis-specific.

Its subcellular location is the cytoplasm. The protein localises to the nucleus. Functionally, testis-specific DNA binding protein responsible for insulator function, nuclear architecture and transcriptional control, which probably acts by recruiting epigenetic chromatin modifiers. Plays a key role in gene imprinting in male germline, by participating in the establishment of differential methylation at the IGF2/H19 imprinted control region (ICR). Directly binds the unmethylated H19 ICR and recruits the PRMT7 methyltransferase, leading to methylate histone H4 'Arg-3' to form H4R3sme2. This probably leads to recruit de novo DNA methyltransferases at these sites. Seems to act as tumor suppressor. In association with DNMT1 and DNMT3B, involved in activation of BAG1 gene expression by binding to its promoter. Required for dimethylation of H3 lysine 4 (H3K4me2) of MYC and BRCA1 promoters. In Mus musculus (Mouse), this protein is Transcriptional repressor CTCFL (Ctcfl).